The sequence spans 957 residues: MGEEKPEVLDAVLKEAVDLENIPIEEVFENLRCTKEGLTATAAQERLAIFGYNKLEEKKDSKLLKFLGFMWNPLSWVMEAAAIMAIALANGGGKPPDWQDFVGIITLLIINSTISFIEENNAGNAAAALMARLAPKAKVLRDGRWKEEDAAVLVPGDIISIKLGDIIPADARLLEGDPLKIDQSALTGESLPVTKGPGDGVYSGSTCKQGEIEAIVIATGVHTFFGKAAHLVDSTNQVGHFQKVLTAIGNFCICSIAVGMIIEIIVMYPIQHRAYRPGIDNLLVLLIGGIPIAMPTVLSVTMAIGSHRLAQQGAITKRMTAIEEMAGMDVLCSDKTGTLTLNKLTVDKNLIEVFAKGVDADMVVLMAARASRTENQDAIDAAIVGMLADPKEARAGIREIHFLPFNPTDKRTALTYLDGEGKMHRVSKGAPEQILNLAHNKSDIERRVHAVIDKFAERGLRSLGVAYQEVPEGRKESAGGPWQFIGLLPLFDPPRHDSAETIRRALNLGVNVKMVTGDQLAIGKETGRRLGMGTNMYPSSALLGQTKDESISALPIDELIEKADGFAGVFPEHKYEIVKRLQARKHICGMTGDGVNDAPALKKADIGIAVDDATDAARSASDIVLTEPGLSVIISAVLTSRAIFQRMKNYTIYAVSITIRIVLGFMLLALIWKFDFPPFMVLIIAILNDGTIMTISKDRVKPSPLPDSWKLAEIFTTGIVLGGYLAMMTVIFFWAAYKTNFFPHVFGVSTLEKTATDDFRKLASAIYLQVSIISQALIFVTRSRSWSFVERPGFLLVIAFVIAQLVATLIAVYANWSFAAIEGIGWGWAGVIWIYNLVFYIPLDIIKFFIRYALSGRAWDLVFERRIAFTRKKDFGKEQRELQWAHAQRTLHGLQVPDTKLFSEATNFNELNQLAEEAKRRAEIARLRELHTLKGHVESVVKLKGLDIETIQQAYTV.

At 1–66 (MGEEKPEVLD…EKKDSKLLKF (66 aa)) the chain is on the cytoplasmic side. A helical transmembrane segment spans residues 67-86 (LGFMWNPLSWVMEAAAIMAI). Topologically, residues 87-98 (ALANGGGKPPDW) are extracellular. A helical transmembrane segment spans residues 99-119 (QDFVGIITLLIINSTISFIEE). At 120-248 (NNAGNAAAAL…GHFQKVLTAI (129 aa)) the chain is on the cytoplasmic side. A helical transmembrane segment spans residues 249-269 (GNFCICSIAVGMIIEIIVMYP). Topologically, residues 270-279 (IQHRAYRPGI) are extracellular. The chain crosses the membrane as a helical span at residues 280-301 (DNLLVLLIGGIPIAMPTVLSVT). Over 302-648 (MAIGSHRLAQ…TSRAIFQRMK (347 aa)) the chain is Cytoplasmic. The 4-aspartylphosphate intermediate role is filled by Asp334. Mg(2+) contacts are provided by Asp593 and Asp597. The helical transmembrane segment at 649-670 (NYTIYAVSITIRIVLGFMLLAL) threads the bilayer. Over 671-675 (IWKFD) the chain is Extracellular. A helical transmembrane segment spans residues 676–698 (FPPFMVLIIAILNDGTIMTISKD). Residues 699–714 (RVKPSPLPDSWKLAEI) are Cytoplasmic-facing. The chain crosses the membrane as a helical span at residues 715 to 735 (FTTGIVLGGYLAMMTVIFFWA). Residues 736–760 (AYKTNFFPHVFGVSTLEKTATDDFR) are Extracellular-facing. Residues 761-781 (KLASAIYLQVSIISQALIFVT) traverse the membrane as a helical segment. Over 782–793 (RSRSWSFVERPG) the chain is Cytoplasmic. A helical membrane pass occupies residues 794-814 (FLLVIAFVIAQLVATLIAVYA). The Extracellular segment spans residues 815–823 (NWSFAAIEG). A helical membrane pass occupies residues 824-844 (IGWGWAGVIWIYNLVFYIPLD). Over 845–957 (IIKFFIRYAL…IETIQQAYTV (113 aa)) the chain is Cytoplasmic.

The protein belongs to the cation transport ATPase (P-type) (TC 3.A.3) family. Type IIIA subfamily. In terms of tissue distribution, expressed in roots, stems, leaves from both vegetative and flowering plants, and flowers at early and late stages of development with highest expression levels found in flowers and stem.

It localises to the cell membrane. The enzyme catalyses ATP + H2O + H(+)(in) = ADP + phosphate + 2 H(+)(out). Its function is as follows. The plasma membrane ATPase of plants and fungi is a hydrogen ion pump. The proton gradient it generates drives the active transport of nutrients by H(+)-symport. The resulting external acidification and/or internal alkinization may mediate growth responses. This Nicotiana plumbaginifolia (Leadwort-leaved tobacco) protein is Plasma membrane ATPase 1 (PMA1).